Reading from the N-terminus, the 425-residue chain is Serine--tRNA ligase (425 aa).

233 to 235 (TAE) is a binding site for L-serine. 264–266 (RRE) lines the ATP pocket. Glutamate 287 lines the L-serine pocket. 351 to 354 (EISS) contacts ATP. Residue serine 385 participates in L-serine binding.

This sequence belongs to the class-II aminoacyl-tRNA synthetase family. Type-1 seryl-tRNA synthetase subfamily. In terms of assembly, homodimer. The tRNA molecule binds across the dimer.

The protein localises to the cytoplasm. It catalyses the reaction tRNA(Ser) + L-serine + ATP = L-seryl-tRNA(Ser) + AMP + diphosphate + H(+). The enzyme catalyses tRNA(Sec) + L-serine + ATP = L-seryl-tRNA(Sec) + AMP + diphosphate + H(+). The protein operates within aminoacyl-tRNA biosynthesis; selenocysteinyl-tRNA(Sec) biosynthesis; L-seryl-tRNA(Sec) from L-serine and tRNA(Sec): step 1/1. Functionally, catalyzes the attachment of serine to tRNA(Ser). Is also able to aminoacylate tRNA(Sec) with serine, to form the misacylated tRNA L-seryl-tRNA(Sec), which will be further converted into selenocysteinyl-tRNA(Sec). In Synechococcus sp. (strain WH7803), this protein is Serine--tRNA ligase.